A 633-amino-acid chain; its full sequence is DNA-directed RNA polymerase subunit gamma (633 aa).

Zn(2+) contacts are provided by C74, C76, C89, and C92. D471, D473, and D475 together coordinate Mg(2+).

It belongs to the RNA polymerase beta' chain family. RpoC1 subfamily. In cyanobacteria the RNAP catalytic core is composed of 2 alpha, 1 beta, 1 beta', 1 gamma and 1 omega subunit. When a sigma factor is associated with the core the holoenzyme is formed, which can initiate transcription. Requires Mg(2+) as cofactor. Zn(2+) is required as a cofactor.

It carries out the reaction RNA(n) + a ribonucleoside 5'-triphosphate = RNA(n+1) + diphosphate. DNA-dependent RNA polymerase catalyzes the transcription of DNA into RNA using the four ribonucleoside triphosphates as substrates. The polypeptide is DNA-directed RNA polymerase subunit gamma (Prochlorococcus marinus (strain MIT 9211)).